Consider the following 440-residue polypeptide: Sorting nexin-31 (440 aa).

Positions 1–109 (MKMHFCIPVS…EFLKLAQLNT (109 aa)) constitute a PX domain.

The protein belongs to the sorting nexin family. Interacts with CCDC22, CCDC93, VPS26C and VPS35L, associates with the retriever and CCC complexes.

In terms of biological role, may be involved in protein trafficking. The polypeptide is Sorting nexin-31 (SNX31) (Homo sapiens (Human)).